We begin with the raw amino-acid sequence, 254 residues long: Undecaprenyl-diphosphatase (254 aa).

Transmembrane regions (helical) follow at residues 1 to 21 (MGII…FLPV), 41 to 61 (AHKA…VFLY), 75 to 95 (LIIA…IIKG), 96 to 116 (LFSP…FIAV), 130 to 150 (ILKI…IAMI), 174 to 194 (AEFS…YDIM), 210 to 230 (TGFV…IGFV), and 234 to 254 (NFVP…LFVL).

Belongs to the UppP family.

The protein resides in the cell inner membrane. The enzyme catalyses di-trans,octa-cis-undecaprenyl diphosphate + H2O = di-trans,octa-cis-undecaprenyl phosphate + phosphate + H(+). Its function is as follows. Catalyzes the dephosphorylation of undecaprenyl diphosphate (UPP). Confers resistance to bacitracin. This chain is Undecaprenyl-diphosphatase, found in Persephonella marina (strain DSM 14350 / EX-H1).